A 234-amino-acid chain; its full sequence is tRNA (guanine-N(1)-)-methyltransferase (234 aa).

S-adenosyl-L-methionine contacts are provided by residues Gly115 and 135-140 (VGDYIL).

The protein belongs to the RNA methyltransferase TrmD family. As to quaternary structure, homodimer.

Its subcellular location is the cytoplasm. The enzyme catalyses guanosine(37) in tRNA + S-adenosyl-L-methionine = N(1)-methylguanosine(37) in tRNA + S-adenosyl-L-homocysteine + H(+). Functionally, specifically methylates guanosine-37 in various tRNAs. In Rickettsia akari (strain Hartford), this protein is tRNA (guanine-N(1)-)-methyltransferase.